A 253-amino-acid chain; its full sequence is DNA polymerase sliding clamp (253 aa).

Belongs to the PCNA family. As to quaternary structure, homotrimer. The subunits circularize to form a toroid; DNA passes through its center. Replication factor C (RFC) is required to load the toroid on the DNA.

Sliding clamp subunit that acts as a moving platform for DNA processing. Responsible for tethering the catalytic subunit of DNA polymerase and other proteins to DNA during high-speed replication. The chain is DNA polymerase sliding clamp from Methanopyrus kandleri (strain AV19 / DSM 6324 / JCM 9639 / NBRC 100938).